The primary structure comprises 410 residues: Voltage-dependent chloride channel 2, chloroplastic (410 aa).

The Lumenal, thylakoid segment spans residues 1-110 (MYQSMNLSFS…RHVSSSPSSR (110 aa)). A helical transmembrane segment spans residues 111 to 131 (VILSLIPPVFFFTTVAILIAG). At 132-147 (YNSAVDLDWLPDFFPV) the chain is on the stromal side. Residues 148–168 (LRASPLPYQLTAPALALLLVF) traverse the membrane as a helical segment. Residues 169 to 315 (RTEASYSRFE…PLSYTRLTSR (147 aa)) are Lumenal, thylakoid-facing. A run of 2 helical transmembrane segments spans residues 316-336 (FLVLWHLTLPVILWDDCHWNV) and 337-357 (VPATFISAASLFCIEEVGVLI). Residues 358–410 (EEPFSMLALDELCAMVLSNSDEAVESKEVIRNRIIAKKRILEIKHSSNGWHKS) are Lumenal, thylakoid-facing.

This sequence belongs to the anion channel-forming bestrophin (TC 1.A.46) family. Voltage-dependent chloride channel subfamily. Mostly expressed in flowers and, to a lower extent, in leaves, stems and roots.

It is found in the plastid. Its subcellular location is the chloroplast thylakoid membrane. The catalysed reaction is chloride(in) = chloride(out). In terms of biological role, voltage-dependent chloride (Cl) channel probably contributing to proton motive force (PMF) partitioning across the thylakoid membrane by anion influx into the lumen. Influences thylakoid ultrastructure, including lumen size and organization. The polypeptide is Voltage-dependent chloride channel 2, chloroplastic (Arabidopsis thaliana (Mouse-ear cress)).